The chain runs to 351 residues: UDP-N-acetylglucosamine--N-acetylmuramyl-(pentapeptide) pyrophosphoryl-undecaprenol N-acetylglucosamine transferase (351 aa).

UDP-N-acetyl-alpha-D-glucosamine-binding positions include 12–14, N124, R160, S188, I239, 258–263, and Q283; these read TGG and ALTVCE.

Belongs to the glycosyltransferase 28 family. MurG subfamily.

Its subcellular location is the cell inner membrane. The catalysed reaction is di-trans,octa-cis-undecaprenyl diphospho-N-acetyl-alpha-D-muramoyl-L-alanyl-D-glutamyl-meso-2,6-diaminopimeloyl-D-alanyl-D-alanine + UDP-N-acetyl-alpha-D-glucosamine = di-trans,octa-cis-undecaprenyl diphospho-[N-acetyl-alpha-D-glucosaminyl-(1-&gt;4)]-N-acetyl-alpha-D-muramoyl-L-alanyl-D-glutamyl-meso-2,6-diaminopimeloyl-D-alanyl-D-alanine + UDP + H(+). It participates in cell wall biogenesis; peptidoglycan biosynthesis. Functionally, cell wall formation. Catalyzes the transfer of a GlcNAc subunit on undecaprenyl-pyrophosphoryl-MurNAc-pentapeptide (lipid intermediate I) to form undecaprenyl-pyrophosphoryl-MurNAc-(pentapeptide)GlcNAc (lipid intermediate II). This Actinobacillus pleuropneumoniae serotype 5b (strain L20) protein is UDP-N-acetylglucosamine--N-acetylmuramyl-(pentapeptide) pyrophosphoryl-undecaprenol N-acetylglucosamine transferase.